Consider the following 944-residue polypeptide: Protocadherin gamma-C5 (944 aa).

A signal peptide spans 1-29; sequence MGPKTLPQLAGKWQVLCMLSLCCWGWVSG. Cadherin domains lie at 30–133, 134–242, 243–350, 351–454, 455–564, and 571–677; these read QLRY…SPSF, ATPE…APTF, QSSV…APEV, LLAS…APRF, NQQL…APAV, and WEHS…MPKS. Over 30 to 693 the chain is Extracellular; sequence QLRYSVVEES…PPERSDLTLY (664 aa). Residues Asn265, Asn443, and Asn547 are each glycosylated (N-linked (GlcNAc...) asparagine). Residues 694–714 form a helical membrane-spanning segment; the sequence is LIVALATVSLLSLVTFTFLSA. The Cytoplasmic segment spans residues 715–944; the sequence is KCLQGNADGD…KKKSGKKEKK (230 aa). Disordered stretches follow at residues 722–747, 812–853, and 914–944; these read DGDG…QSSP, SNTL…WPNN, and ATLT…KEKK. Residues 820–853 are compositionally biased toward polar residues; sequence QQAPPNTDWRFSQAQRPGTSGSQNGDDTGTWPNN. Over residues 934–944 the composition is skewed to basic residues; that stretch reads NKKKSGKKEKK.

It localises to the cell membrane. Potential calcium-dependent cell-adhesion protein. May be involved in the establishment and maintenance of specific neuronal connections in the brain. In Pan troglodytes (Chimpanzee), this protein is Protocadherin gamma-C5 (PCDHGC5).